The primary structure comprises 413 residues: Cell division protein FtsZ 2 (413 aa).

Residues 130-132 (GTG), E169, R173, and D216 each bind GTP.

It belongs to the FtsZ family. As to quaternary structure, homodimer. Polymerizes to form a dynamic ring structure in a strictly GTP-dependent manner. Interacts directly with several other division proteins.

The protein resides in the cytoplasm. Its function is as follows. Essential cell division protein that forms a contractile ring structure (Z ring) at the future cell division site. The regulation of the ring assembly controls the timing and the location of cell division. One of the functions of the FtsZ ring is to recruit other cell division proteins to the septum to produce a new cell wall between the dividing cells. Binds GTP and shows GTPase activity. The protein is Cell division protein FtsZ 2 of Pyrococcus abyssi (strain GE5 / Orsay).